Here is a 506-residue protein sequence, read N- to C-terminus: Aldehyde dehydrogenase (506 aa).

Position 218-224 (218-224 (GFGLEAG)) interacts with NAD(+). Residues E262 and C301 contribute to the active site.

The protein belongs to the aldehyde dehydrogenase family.

It catalyses the reaction an aldehyde + NAD(+) + H2O = a carboxylate + NADH + 2 H(+). This is Aldehyde dehydrogenase from Rhodospirillum rubrum (strain ATCC 11170 / ATH 1.1.1 / DSM 467 / LMG 4362 / NCIMB 8255 / S1).